A 365-amino-acid polypeptide reads, in one-letter code: Endophilin-B1 (365 aa).

The residue at position 1 (Met1) is an N-acetylmethionine. Residues 1 to 30 (MNIMDFNVKKLAADAGTFLSRAVQFTEEKL) form a membrane-binding amphipathic helix region. The segment at 1 to 37 (MNIMDFNVKKLAADAGTFLSRAVQFTEEKLGQAEKTE) is required for membrane binding. In terms of domain architecture, BAR spans 27-261 (EEKLGQAEKT…LGSFPSNYLS (235 aa)). Thr145 is modified (phosphothreonine; by CDK5). Residues 155-195 (YKTIAKERKLLQNKRLDLDAAKTRLKKAKAAETRNSSEQEL) adopt a coiled-coil conformation. The SH3 domain occupies 305–365 (SGSRKARVLY…VPITYLELLN (61 aa)).

Belongs to the endophilin family. Homodimer, and heterodimer with SH3GLB2. Binds BAX; induction of apoptosis augments BAX binding. Binds DNM1, HTT, AMPH, BIN1 and ARFGAP1. Interacts with UVRAG; UVRAG bridges the interaction to BECN1 indicative for an association with the PI3K complex II (PI3KC3-C2). Phosphorylated at Thr-145 by CDK5; this phosphorylation is required for autophagy induction in starved neurons and facilitates homodimerization. As to expression, highly expressed in heart, skeletal muscle, kidney and placenta. Detected at lower levels in brain, colon, thymus, spleen, liver, small intestine, lung and peripheral blood leukocytes.

Its subcellular location is the cytoplasm. The protein resides in the golgi apparatus membrane. It is found in the mitochondrion outer membrane. It localises to the cytoplasmic vesicle. The protein localises to the autophagosome membrane. Its subcellular location is the midbody. Functionally, may be required for normal outer mitochondrial membrane dynamics. Required for coatomer-mediated retrograde transport in certain cells. May recruit other proteins to membranes with high curvature. May promote membrane fusion. Involved in activation of caspase-dependent apoptosis by promoting BAX/BAK1 activation. Isoform 1 acts proapoptotic in fibroblasts. Involved in caspase-independent apoptosis during nutrition starvation and involved in the regulation of autophagy. Activates lipid kinase activity of PIK3C3 during autophagy probably by associating with the PI3K complex II (PI3KC3-C2). Associated with PI3KC3-C2 during autophagy may regulate the trafficking of ATG9A from the Golgi complex to the peripheral cytoplasm for the formation of autophagosomes by inducing Golgi membrane tubulation and fragmentation. Involved in regulation of degradative endocytic trafficking and cytokinesis, probably in the context of PI3KC3-C2. Isoform 2 acts antiapoptotic in neuronal cells; involved in maintenance of mitochondrial morphology and promotes neuronal viability. The protein is Endophilin-B1 (SH3GLB1) of Homo sapiens (Human).